Here is a 332-residue protein sequence, read N- to C-terminus: Anthranilate phosphoribosyltransferase (332 aa).

5-phospho-alpha-D-ribose 1-diphosphate contacts are provided by residues glycine 79, 82 to 83 (GD), serine 87, 89 to 92 (NIST), 107 to 115 (KHGNRSVSS), and serine 119. Position 79 (glycine 79) interacts with anthranilate. Serine 91 is a Mg(2+) binding site. Asparagine 110 is an anthranilate binding site. Arginine 165 is an anthranilate binding site. Mg(2+) contacts are provided by aspartate 223 and glutamate 224.

It belongs to the anthranilate phosphoribosyltransferase family. As to quaternary structure, homodimer. Mg(2+) is required as a cofactor.

The enzyme catalyses N-(5-phospho-beta-D-ribosyl)anthranilate + diphosphate = 5-phospho-alpha-D-ribose 1-diphosphate + anthranilate. It participates in amino-acid biosynthesis; L-tryptophan biosynthesis; L-tryptophan from chorismate: step 2/5. Catalyzes the transfer of the phosphoribosyl group of 5-phosphorylribose-1-pyrophosphate (PRPP) to anthranilate to yield N-(5'-phosphoribosyl)-anthranilate (PRA). In Sodalis glossinidius (strain morsitans), this protein is Anthranilate phosphoribosyltransferase.